The sequence spans 1765 residues: Tight junction protein ZO-1 (1765 aa).

One can recognise a PDZ 1 domain in the interval 23–110 (TVTLHRAPGF…NAKITIRRKK (88 aa)). Positions 102-112 (AKITIRRKKKV) are enriched in basic residues. Positions 102–189 (AKITIRRKKK…QPAKPTKVTL (88 aa)) are disordered. Residues 123–136 (PVSDNEDDSYDEDV) are compositionally biased toward acidic residues. Phosphoserine is present on serine 125. Residue tyrosine 132 is modified to Phosphotyrosine. Basic and acidic residues predominate over residues 149–175 (RRGEKSWARDRSASRDRSLSPRSDRRS). Residues serine 175, serine 178, and serine 179 each carry the phosphoserine modification. Threonine 185 carries the post-translational modification Phosphothreonine. The region spanning 186-264 (KVTLVKSRKN…KLKMVVQRDE (79 aa)) is the PDZ 2 domain. Serine 212 and serine 241 each carry phosphoserine. Threonine 267 carries the post-translational modification Phosphothreonine. Phosphoserine is present on residues serine 275, serine 277, serine 280, serine 284, serine 290, serine 294, serine 297, serine 300, serine 323, serine 329, serine 334, serine 337, and serine 353. Residues 296–363 (ASDHSVRSHD…TPVKHVDDHT (68 aa)) form a disordered region. Positions 299–308 (HSVRSHDRPP) are enriched in basic and acidic residues. Positions 325-338 (HSTQSPQQPSNGSL) are enriched in polar residues. Threonine 354 carries the phosphothreonine modification. In terms of domain architecture, PDZ 3 spans 421–502 (SMKLVKFRKG…GEEVTILAQK (82 aa)). Positions 516-584 (GDSFYIRTHF…PNKNRAEQLA (69 aa)) constitute an SH3 domain. 2 positions are modified to phosphoserine: serine 617 and serine 622. The interval 633–876 (YERVVLREAG…GTPPESAITR (244 aa)) is occludin (OCLN)-binding region. The region spanning 690–791 (RLHTIKQIID…WYGALKEAIQ (102 aa)) is the Guanylate kinase-like domain. The residue at position 809 (threonine 809) is a Phosphothreonine. A phosphoserine mark is found at serine 810 and serine 821. Tyrosine 822 carries the phosphotyrosine modification. Serine 824, serine 828, and serine 837 each carry phosphoserine. Disordered stretches follow at residues 825-941 (APGS…PASS) and 1023-1042 (ALGH…YDPQ). 5 positions are modified to phosphothreonine: threonine 846, threonine 848, threonine 854, threonine 861, and threonine 868. Over residues 879–892 (EPVREDSSGMHHEN) the composition is skewed to basic and acidic residues. The span at 893–906 (QTYPPYSPQAQPQA) shows a compositional bias: low complexity. Position 912 is a phosphoserine (serine 912). Serine 1071 carries the phosphoserine modification. The interval 1092–1585 (SYYDDKQPYP…SSTQPPEFDS (494 aa)) is disordered. Residues 1106–1124 (DTQHPRDLDSRQHPEEASE) show a composition bias toward basic and acidic residues. 2 positions are modified to phosphotyrosine: tyrosine 1139 and tyrosine 1164. Residues 1150–1370 (RTSTLRHEEQ…FDRRSFESKP (221 aa)) are actin-binding region (ABR). 2 stretches are compositionally biased toward basic and acidic residues: residues 1268–1285 (KMFE…KDVN) and 1335–1346 (PPEDIVRSNHYD). Residue tyrosine 1353 is modified to Phosphotyrosine. Serine 1365 is modified (phosphoserine). Residues 1388-1399 (SQSQPNFSSYSS) show a composition bias toward low complexity. Residues 1401–1418 (GKPETDAMDRSFSEKRYD) are compositionally biased toward basic and acidic residues. Serine 1411 carries the post-translational modification Phosphoserine. Polar residues-rich tracts occupy residues 1442–1468 (NSSL…NSYI) and 1509–1519 (GAEQTQKTITP). Residues 1535–1544 (PFERKFESPK) show a composition bias toward basic and acidic residues. A phosphoserine mark is found at serine 1542 and serine 1614. The region spanning 1631–1765 (ATARGIFNSN…NCVSVLIDHF (135 aa)) is the ZU5 domain.

Belongs to the MAGUK family. As to quaternary structure, homodimer. Forms heterodimers TJP3. Forms a heterodimer (via PDZ2 domain) with TJP2/ZO2 (via PDZ2 domain). Interacts with OCLN. Interacts with CALM, claudins, CGN/cingulin, CXADR, GJA12, GJD3 and UBN1. Interacts (via ZU5 domain) with CDC42BPB and MYZAP. Interacts (via PDZ domain) with GJA1. Interacts (via PDZ domains) with ANKRD2. Interacts with BVES (via the C-terminus cytoplasmic tail). Interacts with HSPA4. Interacts with KIRREL1. Interacts with DLL1. Interacts with USP53 (via the C-terminal region). Interacts with DNMBP (via C-terminal domain); required for the apical cell-cell junction localization of DNMBP. Interacts with SPEF1. Interacts (via N-terminus) with CTNNA1. Interacts with CLDN18. Interacts with CLDN16 (via TRV motif); this is a prerequisite for anchoring of CLDN16 at the tight junction. Interacts with PKP1; the interaction facilitates TJP1/ZO-1 localization to the plasma membrane. Phosphorylated at tyrosine redidues in response to epidermal growth factor (EGF). This response is dependent on an intact actin microfilament system. Dephosphorylated by Ptprj.

It localises to the cell membrane. The protein resides in the cell junction. It is found in the tight junction. Its subcellular location is the gap junction. TjpP1, Tjp2, and Tjp3 are closely related scaffolding proteins that link tight junction (TJ) transmembrane proteins such as claudins, junctional adhesion molecules, and occludin to the actin cytoskeleton. The tight junction acts to limit movement of substances through the paracellular space and as a boundary between the compositionally distinct apical and basolateral plasma membrane domains of epithelial and endothelial cells. Necessary for lumenogenesis, and particularly efficient epithelial polarization and barrier formation. Plays a role in the regulation of cell migration by targeting Cdc42bpb to the leading edge of migrating cells. Plays an important role in podosome formation and associated function, thus regulating cell adhesion and matrix remodeling. With Tjp2 and Tjp3, participates in the junctional retention and stability of the transcription factor Dbpa, but is not involved in its shuttling to the nucleus. May play a role in mediating cell morphology changes during ameloblast differentiation via its role in tight junctions. The sequence is that of Tight junction protein ZO-1 from Rattus norvegicus (Rat).